A 197-amino-acid chain; its full sequence is Imidazoleglycerol-phosphate dehydratase (197 aa).

This sequence belongs to the imidazoleglycerol-phosphate dehydratase family.

It localises to the cytoplasm. It catalyses the reaction D-erythro-1-(imidazol-4-yl)glycerol 3-phosphate = 3-(imidazol-4-yl)-2-oxopropyl phosphate + H2O. Its pathway is amino-acid biosynthesis; L-histidine biosynthesis; L-histidine from 5-phospho-alpha-D-ribose 1-diphosphate: step 6/9. This chain is Imidazoleglycerol-phosphate dehydratase, found in Gloeobacter violaceus (strain ATCC 29082 / PCC 7421).